The sequence spans 294 residues: tRNA dimethylallyltransferase (294 aa).

10 to 17 (GITASGKS) contacts ATP. 12–17 (TASGKS) contributes to the substrate binding site. The segment at 36-39 (DSKQ) is interaction with substrate tRNA.

It belongs to the IPP transferase family. In terms of assembly, monomer. Mg(2+) serves as cofactor.

The enzyme catalyses adenosine(37) in tRNA + dimethylallyl diphosphate = N(6)-dimethylallyladenosine(37) in tRNA + diphosphate. Its function is as follows. Catalyzes the transfer of a dimethylallyl group onto the adenine at position 37 in tRNAs that read codons beginning with uridine, leading to the formation of N6-(dimethylallyl)adenosine (i(6)A). This is tRNA dimethylallyltransferase from Wolbachia sp. subsp. Drosophila simulans (strain wRi).